The sequence spans 221 residues: Small ribosomal subunit protein eS1 (221 aa).

It belongs to the eukaryotic ribosomal protein eS1 family.

The chain is Small ribosomal subunit protein eS1 from Pyrobaculum aerophilum (strain ATCC 51768 / DSM 7523 / JCM 9630 / CIP 104966 / NBRC 100827 / IM2).